Consider the following 253-residue polypeptide: MKHIVIPARFSSSRLPGKPLLLIHDRPMILRVVDQAKKVEGFDDLCVATDDERIAEICRAEGVDVVLTSADHPSGTDRLSEVARIKGWDADDIIVNVQGDEPLLPAQLVQQVAKLLVDKPNCSMSTLCEPIHALDEFQRDSIVKVVMSKQNEALYFSRATIPYDRDGAKRDEPTLHTQAFRHLGLYAYRVSLLQEYVTWEMGKLEKLESLEQLRVLENGHRIAIAVAEANLPPGVDTQADLDRLNNMPVESFE.

This sequence belongs to the KdsB family.

Its subcellular location is the cytoplasm. The catalysed reaction is 3-deoxy-alpha-D-manno-oct-2-ulosonate + CTP = CMP-3-deoxy-beta-D-manno-octulosonate + diphosphate. The protein operates within nucleotide-sugar biosynthesis; CMP-3-deoxy-D-manno-octulosonate biosynthesis; CMP-3-deoxy-D-manno-octulosonate from 3-deoxy-D-manno-octulosonate and CTP: step 1/1. It functions in the pathway bacterial outer membrane biogenesis; lipopolysaccharide biosynthesis. Functionally, activates KDO (a required 8-carbon sugar) for incorporation into bacterial lipopolysaccharide in Gram-negative bacteria. The protein is 3-deoxy-manno-octulosonate cytidylyltransferase of Acinetobacter baumannii (strain ATCC 17978 / DSM 105126 / CIP 53.77 / LMG 1025 / NCDC KC755 / 5377).